A 332-amino-acid polypeptide reads, in one-letter code: Glycerol-3-phosphate dehydrogenase [NAD(P)+] (332 aa).

Residues serine 11, phenylalanine 12, lysine 32, and lysine 106 each contribute to the NADPH site. Residues lysine 106, glycine 137, and serine 139 each coordinate sn-glycerol 3-phosphate. Alanine 141 contacts NADPH. Residues lysine 192, aspartate 245, serine 255, arginine 256, and asparagine 257 each coordinate sn-glycerol 3-phosphate. Catalysis depends on lysine 192, which acts as the Proton acceptor. Residue arginine 256 coordinates NADPH. 2 residues coordinate NADPH: valine 280 and glutamate 282.

This sequence belongs to the NAD-dependent glycerol-3-phosphate dehydrogenase family.

It is found in the cytoplasm. The enzyme catalyses sn-glycerol 3-phosphate + NAD(+) = dihydroxyacetone phosphate + NADH + H(+). It catalyses the reaction sn-glycerol 3-phosphate + NADP(+) = dihydroxyacetone phosphate + NADPH + H(+). Its pathway is membrane lipid metabolism; glycerophospholipid metabolism. In terms of biological role, catalyzes the reduction of the glycolytic intermediate dihydroxyacetone phosphate (DHAP) to sn-glycerol 3-phosphate (G3P), the key precursor for phospholipid synthesis. The protein is Glycerol-3-phosphate dehydrogenase [NAD(P)+] of Staphylococcus carnosus (strain TM300).